The sequence spans 294 residues: 7,8-dihydropterin-6-methyl-4-(beta-D-ribofuranosyl)-aminobenzene-5'-phosphate synthase (294 aa).

Residues E116, D186, K228, and H265 each contribute to the substrate site.

It belongs to the metallo-beta-lactamase superfamily. Mg(2+) serves as cofactor.

It catalyses the reaction 4-(beta-D-ribofuranosyl)aminobenzene 5'-phosphate + (7,8-dihydropterin-6-yl)methyl diphosphate = N-[(7,8-dihydropterin-6-yl)methyl]-4-(beta-D-ribofuranosyl)aniline 5'-phosphate + diphosphate. It participates in cofactor biosynthesis; 5,6,7,8-tetrahydromethanopterin biosynthesis. In terms of biological role, catalyzes the condensation of 6-hydroxymethyl-7,8-dihydropterin pyrophosphate (DHPP) with 4-(beta-D-ribofuranosyl)-aminobenzene-5'-phosphate (beta-RFA-P) to form 7,8-dihydropterin-6-methyl-4-(beta-D-ribofuranosyl)-aminobenzene-5'-phosphate, a precursor in the biosynthesis of 5,6,7,8-tetrahydromethanopterin (H4MPT). To a lesser extent, is able to condense beta-RFA-P with another arylamine, 1-(4-aminophenyl)-1-deoxy-D-ribitol (APDR), to form 7,8-dihydropterin-6-methyl-1-(4-aminophenyl)-1-deoxy-D-ribitol. Dephosphorylated beta-RFA-P is not a substrate. The polypeptide is 7,8-dihydropterin-6-methyl-4-(beta-D-ribofuranosyl)-aminobenzene-5'-phosphate synthase (Methanocaldococcus jannaschii (strain ATCC 43067 / DSM 2661 / JAL-1 / JCM 10045 / NBRC 100440) (Methanococcus jannaschii)).